A 637-amino-acid polypeptide reads, in one-letter code: Biosynthetic arginine decarboxylase (637 aa).

At Lys-101 the chain carries N6-(pyridoxal phosphate)lysine. Substrate is bound at residue 286–296 (FDVGGGLAVDY).

This sequence belongs to the Orn/Lys/Arg decarboxylase class-II family. SpeA subfamily. Mg(2+) serves as cofactor. Pyridoxal 5'-phosphate is required as a cofactor.

It carries out the reaction L-arginine + H(+) = agmatine + CO2. The protein operates within amine and polyamine biosynthesis; agmatine biosynthesis; agmatine from L-arginine: step 1/1. Functionally, catalyzes the biosynthesis of agmatine from arginine. The sequence is that of Biosynthetic arginine decarboxylase from Shewanella putrefaciens (strain CN-32 / ATCC BAA-453).